The chain runs to 645 residues: Protein FAM47B (645 aa).

Basic and acidic residues-rich tracts occupy residues Met1 to Arg11, Glu238 to Pro251, and Pro288 to Pro299. Disordered stretches follow at residues Met1–Asp23 and Ala168–Pro321.

Belongs to the FAM47 family.

This Homo sapiens (Human) protein is Protein FAM47B (FAM47B).